The chain runs to 379 residues: MSEFLPFSRPAMGVEELAAVKEVLESGWITTGPKNQALEQAFCQLTGNQHAIAVSSATAGMHITLMALEIGKGDEVITPSLTWVSTLNMISLLGATPVMVDVDRDTLMVTPEAIESAITPRTKAIIPVHYAGAPADIDAIRAIGERYGIAVIEDAAHAVGTYYKGRHIGAKGTAIFSFHAIKNITCAEGGLIVTDNENLARQLRMLKFHGLGVDAYDRQTWGRAPQAEVLTPGYKYNLTDINAAIALTQLAKLEHLNTRRREIAQQYQQALAALPFQPLSLPAWPHVHAWHLFIIRVDEQRCGISRDALMEALKERGIGTGLHFRAAHTQKYYRERCPTLSLPNTEWNSERICSLPLFPDMTTADADRVITALQQLAGQ.

Lysine 182 carries the post-translational modification N6-(pyridoxal phosphate)lysine.

The protein belongs to the DegT/DnrJ/EryC1 family. ArnB subfamily. As to quaternary structure, homodimer. It depends on pyridoxal 5'-phosphate as a cofactor.

The catalysed reaction is UDP-4-amino-4-deoxy-beta-L-arabinose + 2-oxoglutarate = UDP-beta-L-threo-pentopyranos-4-ulose + L-glutamate. The protein operates within nucleotide-sugar biosynthesis; UDP-4-deoxy-4-formamido-beta-L-arabinose biosynthesis; UDP-4-deoxy-4-formamido-beta-L-arabinose from UDP-alpha-D-glucuronate: step 2/3. It functions in the pathway bacterial outer membrane biogenesis; lipopolysaccharide biosynthesis. In terms of biological role, catalyzes the conversion of UDP-4-keto-arabinose (UDP-Ara4O) to UDP-4-amino-4-deoxy-L-arabinose (UDP-L-Ara4N). The modified arabinose is attached to lipid A and is required for resistance to polymyxin and cationic antimicrobial peptides. This chain is UDP-4-amino-4-deoxy-L-arabinose--oxoglutarate aminotransferase, found in Escherichia coli O7:K1 (strain IAI39 / ExPEC).